The primary structure comprises 152 residues: Methylglyoxal synthase (152 aa).

The MGS-like domain occupies 6–152 (RTMATAKNIA…YQHYLNGRLK (147 aa)). Substrate is bound by residues His-19, Lys-23, 45 to 48 (TGTT), and 65 to 66 (SG). Catalysis depends on Asp-71, which acts as the Proton donor/acceptor. His-98 contacts substrate.

This sequence belongs to the methylglyoxal synthase family.

The enzyme catalyses dihydroxyacetone phosphate = methylglyoxal + phosphate. In terms of biological role, catalyzes the formation of methylglyoxal from dihydroxyacetone phosphate. The protein is Methylglyoxal synthase of Photorhabdus laumondii subsp. laumondii (strain DSM 15139 / CIP 105565 / TT01) (Photorhabdus luminescens subsp. laumondii).